Here is a 665-residue protein sequence, read N- to C-terminus: Pentatricopeptide repeat-containing protein At1g04840 (665 aa).

PPR repeat units follow at residues 90–124 (NPFV…GVKP), 125–155 (DRLT…TLKN), 160–190 (DSFV…SPDR), 195–229 (SILI…NSGS), 230–256 (WSTL…MPEK), 257–291 (NVVS…GLKP), 292–326 (NEYT…GIKL), 327–357 (DRAI…MNHK), 358–392 (DILS…GEKP), 393–423 (DEVV…MRLD), and 429–459 (TLKH…MPIN). The interval 464–539 (TWAALYRACK…SLGWSYIELD (76 aa)) is type E motif. Residues 540-570 (GQLNKFSAGDYSHKLTQEIGLKLDEIISLAI) are type E(+) motif. The type DYW motif stretch occupies residues 571–665 (QKGYNPGADW…DGRCSCGDYW (95 aa)).

The protein belongs to the PPR family. PCMP-H subfamily.

The sequence is that of Pentatricopeptide repeat-containing protein At1g04840 (PCMP-H64) from Arabidopsis thaliana (Mouse-ear cress).